We begin with the raw amino-acid sequence, 330 residues long: Glucokinase (330 aa).

The protein belongs to the ROK (NagC/XylR) family.

It localises to the cytoplasm. It carries out the reaction D-glucose + ATP = D-glucose 6-phosphate + ADP + H(+). This Halalkalibacterium halodurans (strain ATCC BAA-125 / DSM 18197 / FERM 7344 / JCM 9153 / C-125) (Bacillus halodurans) protein is Glucokinase (glcK).